The following is a 259-amino-acid chain: Exosome complex component Rrp42 (259 aa).

It belongs to the RNase PH family. Rrp42 subfamily. Component of the archaeal exosome complex. Forms a hexameric ring-like arrangement composed of 3 Rrp41-Rrp42 heterodimers. The hexameric ring associates with a trimer of Rrp4 and/or Csl4 subunits.

It is found in the cytoplasm. Non-catalytic component of the exosome, which is a complex involved in RNA degradation. Contributes to the structuring of the Rrp41 active site. The sequence is that of Exosome complex component Rrp42 from Archaeoglobus fulgidus (strain ATCC 49558 / DSM 4304 / JCM 9628 / NBRC 100126 / VC-16).